The sequence spans 509 residues: FAD-linked oxidoreductase dpmaF (509 aa).

The first 21 residues, 1–21 (MTRLSLQLIAGLAGQAWLVNS), serve as a signal peptide directing secretion. In terms of domain architecture, FAD-binding PCMH-type spans 59–231 (LQYEPIAVAV…AEYGFETFPA (173 aa)). Residues Asn-125, Asn-193, and Asn-281 are each glycosylated (N-linked (GlcNAc...) asparagine).

It belongs to the oxygen-dependent FAD-linked oxidoreductase family. Requires FAD as cofactor.

Its pathway is secondary metabolite biosynthesis; terpenoid biosynthesis. FAD-linked oxidoreductase; part of the gene cluster that mediates the biosynthesis of the diterpenoid pyrones subglutinols A and B. The first step of the pathway is the synthesis of the alpha-pyrone moiety by the polyketide synthase dpmaA via condensation of one acetyl-CoA starter unit with 3 malonyl-CoA units and 2 methylations. The alpha-pyrone is then combined with geranylgeranyl pyrophosphate (GGPP) formed by the GGPP synthase dpmaD through the action of the prenyltransferase dpmaC to yield a linear alpha-pyrone diterpenoid. Subsequent steps in the diterpenoid pyrone biosynthetic pathway involve the decalin core formation, which is initiated by the epoxidation of the C10-C11 olefin by the FAD-dependent oxidoreductase dpmaE, and is followed by a cyclization cascade catalyzed by the terpene cyclase dpmaB. The dehydrogenase dpmaF is then involved in tetrahydrofuran (THF) ring formation at the C5 unit to complete the formation of subglutinols A and B. In Metarhizium anisopliae (Entomophthora anisopliae), this protein is FAD-linked oxidoreductase dpmaF.